The chain runs to 179 residues: ATP synthase subunit delta (179 aa).

The protein belongs to the ATPase delta chain family. In terms of assembly, F-type ATPases have 2 components, F(1) - the catalytic core - and F(0) - the membrane proton channel. F(1) has five subunits: alpha(3), beta(3), gamma(1), delta(1), epsilon(1). F(0) has three main subunits: a(1), b(2) and c(10-14). The alpha and beta chains form an alternating ring which encloses part of the gamma chain. F(1) is attached to F(0) by a central stalk formed by the gamma and epsilon chains, while a peripheral stalk is formed by the delta and b chains.

The protein resides in the cell inner membrane. Functionally, f(1)F(0) ATP synthase produces ATP from ADP in the presence of a proton or sodium gradient. F-type ATPases consist of two structural domains, F(1) containing the extramembraneous catalytic core and F(0) containing the membrane proton channel, linked together by a central stalk and a peripheral stalk. During catalysis, ATP synthesis in the catalytic domain of F(1) is coupled via a rotary mechanism of the central stalk subunits to proton translocation. Its function is as follows. This protein is part of the stalk that links CF(0) to CF(1). It either transmits conformational changes from CF(0) to CF(1) or is implicated in proton conduction. The chain is ATP synthase subunit delta from Burkholderia orbicola (strain MC0-3).